Consider the following 87-residue polypeptide: Large ribosomal subunit protein bL31B (87 aa).

The protein belongs to the bacterial ribosomal protein bL31 family. Type B subfamily. As to quaternary structure, part of the 50S ribosomal subunit.

The polypeptide is Large ribosomal subunit protein bL31B (Pseudomonas aeruginosa (strain LESB58)).